The chain runs to 461 residues: ADP-specific phosphofructokinase (461 aa).

Positions 1-457 constitute an ADPK domain; the sequence is MVRELLEKAR…FASYLAMLKE (457 aa). 3 residues coordinate Mg(2+): E268, E298, and D441. The Proton acceptor role is filled by D441.

It belongs to the carbohydrate kinase PfkC family. Mg(2+) is required as a cofactor.

Its subcellular location is the cytoplasm. The catalysed reaction is beta-D-fructose 6-phosphate + ADP = beta-D-fructose 1,6-bisphosphate + AMP + H(+). It participates in carbohydrate degradation; glycolysis. Functionally, catalyzes the phosphorylation of fructose 6-phosphate to fructose 1,6-bisphosphate using ADP as the phosphate donor. This is ADP-specific phosphofructokinase from Thermococcus zilligii.